Reading from the N-terminus, the 523-residue chain is Katanin p60 ATPase-containing subunit A1 (523 aa).

The segment at 82 to 215 (KEAPTGRRAA…DGKSKRGLYE (134 aa)) is disordered. A compositionally biased stretch (low complexity) spans 178–194 (AGARSSTAGKKGAASKS). 279–286 (GPPGTGKT) provides a ligand contact to ATP.

Belongs to the AAA ATPase family. Katanin p60 subunit A1 subfamily. As to quaternary structure, may homooligomerize. Component of KTN80-KTN1 complexes composed of a hexamer of KTN1-KTN80 heterodimers that sense microtubule (MT) geometry to confer precise MT severing. Interacts directly with KTN80.1, KTN80.2, KTN80.3 and KTN80.4. Can interact with KTN80.1. May interact with the kinesin related protein KIN14A. Interacts with microtubule polymers. Binds to IPGA1. In terms of tissue distribution, expressed ubiquitously, including siliques, flowers, leaves, stems and roots.

It localises to the cytoplasm. The protein resides in the cytoskeleton. The enzyme catalyses n ATP + n H2O + a microtubule = n ADP + n phosphate + (n+1) alpha/beta tubulin heterodimers.. In terms of biological role, severs microtubules in vitro in an ATP-dependent manner. Required for oligomerization of functional KTN80-KTN1 complexes that catalyze microtubule severing. This activity may promote rapid reorganization of cellular microtubule arrays. May be required for reorientation of cortical microtubule arrays during cellular elongation. Failure to correctly orient these arrays drastically compromises fiber length, cell wall thickness and mechanical strength. May also be required for the spatial organization of developmental cues within the root. Involved in the IPGA1- and AN-dependent regulation of pavement cells morphogenesis leading to puzzle shape. The protein is Katanin p60 ATPase-containing subunit A1 of Arabidopsis thaliana (Mouse-ear cress).